The primary structure comprises 66 residues: EAEKCBZZPGWTKGGCETCGCAQKIVPCTRETKPNPQCPRKQCCIASAGFVRDAQGNCIKFEDCPK.

Cystine bridges form between C5–C28, C16–C44, C19–C58, C21–C38, and C43–C64.

Its subcellular location is the secreted. This chain is Trypsin inhibitor, found in Ascaris suum (Pig roundworm).